The following is a 244-amino-acid chain: MMRTQCLLGLRTFVAFAAKLWSFFIYLLRRQIRTVIQYQTVRYDILPLSPVSRNRLAQVKRKILVLDLDETLIHSHHDGVLRPTVRPGTPPDFILKVVIDKHPVRFFVHKRPHVDFFLEVVSQWYELVVFTASMEIYGSAVADKLDNSRSILKRRYYRQHCTLELGSYIKDLSVVHSDLSSIVILDNSPGAYRSHPDNAIPIKSWFSDPSDTALLNLLPMLDALRFTADVRSVLSRNLHQHRLW.

The chain crosses the membrane as a helical span at residues 7–29 (LLGLRTFVAFAAKLWSFFIYLLR). The FCP1 homology domain maps to 57–224 (AQVKRKILVL…LNLLPMLDAL (168 aa)).

Belongs to the dullard family. (Microbial infection) Interacts with Chandipura virus matrix protein. As to quaternary structure, interacts with CNEP1R1; the complex dephosphorylates LPIN1 and LPIN2. As to expression, muscle specific with lower expression in other metabolic tissues.

The protein resides in the endoplasmic reticulum membrane. Its subcellular location is the nucleus membrane. It catalyses the reaction O-phospho-L-seryl-[protein] + H2O = L-seryl-[protein] + phosphate. It carries out the reaction O-phospho-L-threonyl-[protein] + H2O = L-threonyl-[protein] + phosphate. Functionally, serine/threonine protein phosphatase forming with CNEP1R1 an active phosphatase complex that dephosphorylates and may activate LPIN1 and LPIN2. LPIN1 and LPIN2 are phosphatidate phosphatases that catalyze the conversion of phosphatidic acid to diacylglycerol and control the metabolism of fatty acids at different levels. May indirectly modulate the lipid composition of nuclear and/or endoplasmic reticulum membranes and be required for proper nuclear membrane morphology and/or dynamics. May also indirectly regulate the production of lipid droplets and triacylglycerol. May antagonize BMP signaling. The chain is CTD nuclear envelope phosphatase 1 (CTDNEP1) from Homo sapiens (Human).